The primary structure comprises 337 residues: DNA-directed RNA polymerase subunit alpha (337 aa).

Residues 1-233 are alpha N-terminal domain (alpha-NTD); the sequence is MVREEVVGST…DLFIPFLHAE (233 aa). Positions 265 to 337 are alpha C-terminal domain (alpha-CTD); sequence KEIALKCIFI…FAIDLPKNKF (73 aa).

This sequence belongs to the RNA polymerase alpha chain family. As to quaternary structure, in plastids the minimal PEP RNA polymerase catalytic core is composed of four subunits: alpha, beta, beta', and beta''. When a (nuclear-encoded) sigma factor is associated with the core the holoenzyme is formed, which can initiate transcription.

The protein resides in the plastid. The protein localises to the chloroplast. The enzyme catalyses RNA(n) + a ribonucleoside 5'-triphosphate = RNA(n+1) + diphosphate. In terms of biological role, DNA-dependent RNA polymerase catalyzes the transcription of DNA into RNA using the four ribonucleoside triphosphates as substrates. In Acorus calamus (Sweet flag), this protein is DNA-directed RNA polymerase subunit alpha.